Consider the following 610-residue polypeptide: UvrABC system protein C (610 aa).

The GIY-YIG domain occupies 16–94 (SAPGVYRMYD…IKQYMPKYNV (79 aa)). The 36-residue stretch at 203 to 238 (KQVISQLVAKMETAAIDMEYERAAQYRDQITALRRV) folds into the UVR domain.

This sequence belongs to the UvrC family. In terms of assembly, interacts with UvrB in an incision complex.

It localises to the cytoplasm. Functionally, the UvrABC repair system catalyzes the recognition and processing of DNA lesions. UvrC both incises the 5' and 3' sides of the lesion. The N-terminal half is responsible for the 3' incision and the C-terminal half is responsible for the 5' incision. The polypeptide is UvrABC system protein C (Shewanella frigidimarina (strain NCIMB 400)).